Consider the following 337-residue polypeptide: MAQRPNLLSHLQDLVTKFKNMTMAQDRFKFVFTANEAALEGVTDPIRLPNLIRKAMCLARAPISKYKVGAVGRASSGRVYLGVNVDFPGLPLHHSIHAEQFLVTNLALNYEKDLCKLAVAISTDGLEFGTPCGNCLQFLMEMSNALDMKILSKPKHEAGSFSSLRLLLPNVLPKGSPFLLEKRYNCLTLSGSAGEICSLDCSHLKRRALAAANNSFSPYTESPSGVALLDNDGNWYRGWYIESVASNPSLGPVQAALVDFVARSRGKMFNKIVQAVLVEKNNASVSQERTAKIILDTIAPNCDFKVFHCSVDCAKRLKYLRETLVIDTLGDYTGLHY.

CMP/dCMP-type deaminase domains follow at residues threonine 43–leucine 164 and leucine 199–leucine 320. Asparagine 84 to aspartate 86 serves as a coordination point for substrate. Residue histidine 97 participates in Zn(2+) binding. The active-site Proton donor is the glutamate 99. Residues cysteine 132 and cysteine 135 each contribute to the Zn(2+) site.

Belongs to the cytidine and deoxycytidylate deaminase family. As to quaternary structure, homodimer. Zn(2+) is required as a cofactor.

It carries out the reaction cytidine + H2O + H(+) = uridine + NH4(+). It catalyses the reaction 2'-deoxycytidine + H2O + H(+) = 2'-deoxyuridine + NH4(+). Its function is as follows. This enzyme scavenges exogenous and endogenous cytidine and 2'-deoxycytidine for UMP synthesis. This chain is Cytidine deaminase 2 (CDA2), found in Arabidopsis thaliana (Mouse-ear cress).